Here is a 177-residue protein sequence, read N- to C-terminus: Bifunctional protein PyrR (177 aa).

Positions 99 to 111 match the PRPP-binding motif; sequence VVLVDDVLFTGRT.

This sequence belongs to the purine/pyrimidine phosphoribosyltransferase family. PyrR subfamily.

The enzyme catalyses UMP + diphosphate = 5-phospho-alpha-D-ribose 1-diphosphate + uracil. In terms of biological role, regulates the transcription of the pyrimidine nucleotide (pyr) operon in response to exogenous pyrimidines. Its function is as follows. Also displays a weak uracil phosphoribosyltransferase activity which is not physiologically significant. The polypeptide is Bifunctional protein PyrR (Geobacter sp. (strain M21)).